A 139-amino-acid chain; its full sequence is Aspartate 1-decarboxylase (139 aa).

S26 serves as the catalytic Schiff-base intermediate with substrate; via pyruvic acid. Pyruvic acid (Ser) is present on S26. T58 is a binding site for substrate. Y59 serves as the catalytic Proton donor. 72-74 (GGA) serves as a coordination point for substrate.

The protein belongs to the PanD family. As to quaternary structure, heterooctamer of four alpha and four beta subunits. Pyruvate is required as a cofactor. In terms of processing, is synthesized initially as an inactive proenzyme, which is activated by self-cleavage at a specific serine bond to produce a beta-subunit with a hydroxyl group at its C-terminus and an alpha-subunit with a pyruvoyl group at its N-terminus.

It is found in the cytoplasm. The catalysed reaction is L-aspartate + H(+) = beta-alanine + CO2. It functions in the pathway cofactor biosynthesis; (R)-pantothenate biosynthesis; beta-alanine from L-aspartate: step 1/1. Its function is as follows. Catalyzes the pyruvoyl-dependent decarboxylation of aspartate to produce beta-alanine. In Microcystis aeruginosa (strain NIES-843 / IAM M-2473), this protein is Aspartate 1-decarboxylase.